A 767-amino-acid chain; its full sequence is Cilia- and flagella-associated protein 91 (767 aa).

The tract at residues Met-1–Ser-29 is disordered.

Belongs to the CFAP91 family. As to quaternary structure, interacts with MYCBP and AKAP1. Part of a complex containing MYCBP, AKAP1 and PRKAR2B. Interacts with CFAP61. Does not interact with MYCBP. Post-translationally, phosphorylated by PKA. In terms of tissue distribution, strongly expressed in the liver. Widely expressed, but strongly expressed in all spermatogenesis-related tissues, including the testis, the epithelium of cauda and the corpus epididymis, as well as the spermatid and mature sperm. Also expressed in Leydig cells.

The protein resides in the mitochondrion. The protein localises to the cytoplasm. Its subcellular location is the cytoskeleton. It is found in the cilium axoneme. In terms of biological role, involved in sperm flagellum axonemal organization and function. May regulate cilium motility through its role in the assembly of the axonemal radial spokes. In Homo sapiens (Human), this protein is Cilia- and flagella-associated protein 91.